We begin with the raw amino-acid sequence, 318 residues long: MLEAAGAVLLGSAALLMVGRLGNRGFFLWLRTVGILGLLVGILSLALAALTGSAIAGLVVGVITAAMMYLFSSRIVRIQMGAVDAEEFLRYKPEYADKLRRVQEMVSKLASKAGLPEPELVVVPEETGVGGYPNAFATGRRSKPTVGVTEGLLRHLDDDEIYGVLGHELAHVKNRDTLVMTVAAAVSTAIAYAFDPWLNAMYTEDWEDIAFLVLAGMLASLISTLLVAAISRSREYLADEEGAKLSGNPMALAEALEKIEAIVKSNPAPARSLSEVSTAHLWIENPFRGGLLRLFSTHPPVEKRVERLRRLARELQGP.

Transmembrane regions (helical) follow at residues 1-21 (MLEAAGAVLLGSAALLMVGRL), 35-55 (ILGLLVGILSLALAALTGSAI), and 56-76 (AGLVVGVITAAMMYLFSSRIV). H167 provides a ligand contact to Zn(2+). Residue E168 is part of the active site. H171 is a Zn(2+) binding site. A run of 2 helical transmembrane segments spans residues 178-198 (LVMTVAAAVSTAIAYAFDPWL) and 209-229 (IAFLVLAGMLASLISTLLVAA). E235 provides a ligand contact to Zn(2+).

Belongs to the peptidase M48B family. Zn(2+) serves as cofactor.

The protein localises to the cell membrane. This Methanopyrus kandleri (strain AV19 / DSM 6324 / JCM 9639 / NBRC 100938) protein is Protease HtpX homolog.